A 359-amino-acid polypeptide reads, in one-letter code: sn-1 linoleoyl-lipid 6-desaturase (359 aa).

Transmembrane regions (helical) follow at residues 45–65 (LIIV…PVIF) and 69–89 (LLGC…VGHD). Residues 88 to 92 (HDANH) carry the Histidine box-1 motif. Residues 123–128 (HNYLHH) carry the Histidine box-2 motif. 3 helical membrane-spanning segments follow: residues 165-185 (IWGL…YLVL), 206-226 (LLGI…ALGF), and 231-251 (VLIG…TIFM). Residues 306–310 (HHLFP) carry the Histidine box-3 motif.

It belongs to the fatty acid desaturase type 2 family. Fe(2+) is required as a cofactor.

Its subcellular location is the membrane. The enzyme catalyses a 1-[(9Z,12Z)-octadecdienoyl]-2-acyl-glycerolipid + 2 reduced [2Fe-2S]-[ferredoxin] + O2 + 2 H(+) = a 1-[(6Z,9Z,12Z)-octadectrienoyl]-2-acyl-glycerolipid + 2 oxidized [2Fe-2S]-[ferredoxin] + 2 H2O. It participates in lipid metabolism; polyunsaturated fatty acid biosynthesis. Functionally, desaturase involved in fatty acid biosynthesis. Introduces a double bond at carbon 6 of linoleoyl group (18:2) attached to the sn-1 position of the glycerol moiety of membrane glycerolipids, leading to the formation of gamma-linolenic acid (GLA). The sequence is that of sn-1 linoleoyl-lipid 6-desaturase from Synechocystis sp. (strain ATCC 27184 / PCC 6803 / Kazusa).